The chain runs to 511 residues: Bifunctional purine biosynthesis protein PurH (511 aa).

The MGS-like domain occupies 1–147 (MIQIKRALIS…KNYKHTLVLT (147 aa)).

This sequence belongs to the PurH family.

The enzyme catalyses (6R)-10-formyltetrahydrofolate + 5-amino-1-(5-phospho-beta-D-ribosyl)imidazole-4-carboxamide = 5-formamido-1-(5-phospho-D-ribosyl)imidazole-4-carboxamide + (6S)-5,6,7,8-tetrahydrofolate. The catalysed reaction is IMP + H2O = 5-formamido-1-(5-phospho-D-ribosyl)imidazole-4-carboxamide. The protein operates within purine metabolism; IMP biosynthesis via de novo pathway; 5-formamido-1-(5-phospho-D-ribosyl)imidazole-4-carboxamide from 5-amino-1-(5-phospho-D-ribosyl)imidazole-4-carboxamide (10-formyl THF route): step 1/1. Its pathway is purine metabolism; IMP biosynthesis via de novo pathway; IMP from 5-formamido-1-(5-phospho-D-ribosyl)imidazole-4-carboxamide: step 1/1. The polypeptide is Bifunctional purine biosynthesis protein PurH (Leptospira borgpetersenii serovar Hardjo-bovis (strain JB197)).